The sequence spans 65 residues: Large ribosomal subunit protein bL35 (65 aa).

The disordered stretch occupies residues Met-1–Gln-26. The segment covering Ala-10–Gln-26 has biased composition (basic residues).

Belongs to the bacterial ribosomal protein bL35 family.

The polypeptide is Large ribosomal subunit protein bL35 (Histophilus somni (strain 2336) (Haemophilus somnus)).